A 223-amino-acid polypeptide reads, in one-letter code: Deoxyribose-phosphate aldolase (223 aa).

Asp-89 serves as the catalytic Proton donor/acceptor. The Schiff-base intermediate with acetaldehyde role is filled by Lys-152. The active-site Proton donor/acceptor is the Lys-181.

Belongs to the DeoC/FbaB aldolase family. DeoC type 1 subfamily.

It is found in the cytoplasm. It catalyses the reaction 2-deoxy-D-ribose 5-phosphate = D-glyceraldehyde 3-phosphate + acetaldehyde. Its pathway is carbohydrate degradation; 2-deoxy-D-ribose 1-phosphate degradation; D-glyceraldehyde 3-phosphate and acetaldehyde from 2-deoxy-alpha-D-ribose 1-phosphate: step 2/2. Functionally, catalyzes a reversible aldol reaction between acetaldehyde and D-glyceraldehyde 3-phosphate to generate 2-deoxy-D-ribose 5-phosphate. In Bacillus cereus (strain ATCC 14579 / DSM 31 / CCUG 7414 / JCM 2152 / NBRC 15305 / NCIMB 9373 / NCTC 2599 / NRRL B-3711), this protein is Deoxyribose-phosphate aldolase.